The chain runs to 283 residues: Undecaprenyl-diphosphatase (283 aa).

7 helical membrane passes run 40 to 60 (GAAF…IYFF), 85 to 105 (AKMG…GLLF), 113 to 133 (LRSL…LTIA), 153 to 173 (IGWK…IPGS), 193 to 213 (AARF…VFQL), 227 to 247 (LIAI…SIAF), and 259 to 279 (VFII…ATGM).

It belongs to the UppP family.

It is found in the cell inner membrane. It catalyses the reaction di-trans,octa-cis-undecaprenyl diphosphate + H2O = di-trans,octa-cis-undecaprenyl phosphate + phosphate + H(+). Catalyzes the dephosphorylation of undecaprenyl diphosphate (UPP). Confers resistance to bacitracin. This chain is Undecaprenyl-diphosphatase, found in Chlorobium limicola (strain DSM 245 / NBRC 103803 / 6330).